The chain runs to 481 residues: Proline--tRNA ligase (481 aa).

It belongs to the class-II aminoacyl-tRNA synthetase family. ProS type 3 subfamily. As to quaternary structure, homodimer.

It is found in the cytoplasm. The catalysed reaction is tRNA(Pro) + L-proline + ATP = L-prolyl-tRNA(Pro) + AMP + diphosphate. In terms of biological role, catalyzes the attachment of proline to tRNA(Pro) in a two-step reaction: proline is first activated by ATP to form Pro-AMP and then transferred to the acceptor end of tRNA(Pro). The chain is Proline--tRNA ligase from Chloroherpeton thalassium (strain ATCC 35110 / GB-78).